The primary structure comprises 261 residues: Na(+)-translocating NADH-quinone reductase subunit C (261 aa).

The helical transmembrane segment at Leu12 to Gly32 threads the bilayer. An FMN phosphoryl threonine modification is found at Thr229.

Composed of six subunits; NqrA, NqrB, NqrC, NqrD, NqrE and NqrF. It depends on FMN as a cofactor.

The protein resides in the cell inner membrane. It carries out the reaction a ubiquinone + n Na(+)(in) + NADH + H(+) = a ubiquinol + n Na(+)(out) + NAD(+). In terms of biological role, NQR complex catalyzes the reduction of ubiquinone-1 to ubiquinol by two successive reactions, coupled with the transport of Na(+) ions from the cytoplasm to the periplasm. NqrA to NqrE are probably involved in the second step, the conversion of ubisemiquinone to ubiquinol. The sequence is that of Na(+)-translocating NADH-quinone reductase subunit C from Vibrio campbellii (strain ATCC BAA-1116).